An 89-amino-acid chain; its full sequence is Large ribosomal subunit protein uL24 (89 aa).

This sequence belongs to the universal ribosomal protein uL24 family. Part of the 50S ribosomal subunit.

In terms of biological role, one of two assembly initiator proteins, it binds directly to the 5'-end of the 23S rRNA, where it nucleates assembly of the 50S subunit. Its function is as follows. One of the proteins that surrounds the polypeptide exit tunnel on the outside of the subunit. This Oenococcus oeni (strain ATCC BAA-331 / PSU-1) protein is Large ribosomal subunit protein uL24.